Here is a 423-residue protein sequence, read N- to C-terminus: COP9 signalosome complex subunit 3 (423 aa).

Ala-2 carries the N-acetylalanine modification. A PCI domain is found at Asn-197–Glu-365. A disordered region spans residues Gln-402 to Ser-423. 3 positions are modified to phosphoserine: Ser-407, Ser-410, and Ser-423.

This sequence belongs to the CSN3 family. In terms of assembly, component of the CSN complex, composed of COPS1/GPS1, COPS2, COPS3, COPS4, COPS5, COPS6, COPS7 (COPS7A or COPS7B), COPS8 and COPS9 isoform 1. In the complex, it probably interacts directly with COPS1, COPS4, COPS8 and COPS9 isoform 1. Interacts with CK2 and PKD. Interacts with the translation initiation factor EIF3S6 and IKBKG. Interacts with ERCC6. As to expression, widely expressed. Expressed at high level in heart and skeletal muscle.

It localises to the cytoplasm. The protein localises to the nucleus. Functionally, component of the COP9 signalosome complex (CSN), a complex involved in various cellular and developmental processes. The CSN complex is an essential regulator of the ubiquitin (Ubl) conjugation pathway by mediating the deneddylation of the cullin subunits of SCF-type E3 ligase complexes, leading to decrease the Ubl ligase activity of SCF-type complexes such as SCF, CSA or DDB2. The complex is also involved in phosphorylation of p53/TP53, c-jun/JUN, IkappaBalpha/NFKBIA, ITPK1 and IRF8/ICSBP, possibly via its association with CK2 and PKD kinases. CSN-dependent phosphorylation of TP53 and JUN promotes and protects degradation by the Ubl system, respectively. The protein is COP9 signalosome complex subunit 3 (COPS3) of Homo sapiens (Human).